We begin with the raw amino-acid sequence, 271 residues long: Protein PXR1 (271 aa).

In terms of domain architecture, G-patch spans 25–72 (TSRFGHQFLEKFGWKPGMGLGLSPMNSNTSHIKVSIKDDNVGLGAKLK). Residues 147–239 (SNAKKRKREG…SASNIPDAVN (93 aa)) are disordered. Residues 157 to 168 (DDSEDEDDDDKE) show a composition bias toward acidic residues. Over residues 175-203 (KKHKKHKKHKKDKKKDKKDKKEHKKHKKE) the composition is skewed to basic residues. The span at 204–221 (EKRLKKEKRAEKTKETKK) shows a compositional bias: basic and acidic residues. Ser-230 is subject to Phosphoserine.

This sequence belongs to the PINX1 family. As to quaternary structure, interacts with EST2.

It localises to the nucleus. It is found in the nucleolus. Involved in rRNA-processing at A0, A1 and A2 sites through its action in U18 and U24 snoRNA 3'-end final trimming. Negative regulator of telomerase through competition for binding to EST2 with TLC1. This is Protein PXR1 (PXR1) from Saccharomyces cerevisiae (strain ATCC 204508 / S288c) (Baker's yeast).